We begin with the raw amino-acid sequence, 432 residues long: Gamma-glutamyl phosphate reductase (432 aa).

The protein belongs to the gamma-glutamyl phosphate reductase family.

It localises to the cytoplasm. The catalysed reaction is L-glutamate 5-semialdehyde + phosphate + NADP(+) = L-glutamyl 5-phosphate + NADPH + H(+). Its pathway is amino-acid biosynthesis; L-proline biosynthesis; L-glutamate 5-semialdehyde from L-glutamate: step 2/2. Catalyzes the NADPH-dependent reduction of L-glutamate 5-phosphate into L-glutamate 5-semialdehyde and phosphate. The product spontaneously undergoes cyclization to form 1-pyrroline-5-carboxylate. This is Gamma-glutamyl phosphate reductase from Kineococcus radiotolerans (strain ATCC BAA-149 / DSM 14245 / SRS30216).